Reading from the N-terminus, the 275-residue chain is Large ribosomal subunit protein uL2 (275 aa).

Over residues 28–38 (EPYAPLLDKKS) the composition is skewed to basic and acidic residues. Disordered regions lie at residues 28-55 (EPYAPLLDKKSKSGGRNNTGRITTRHVG) and 224-258 (AMNPVDHPHGGGEGRTSGGRHPVSPWGIPTKGYKT).

Belongs to the universal ribosomal protein uL2 family. In terms of assembly, part of the 50S ribosomal subunit. Forms a bridge to the 30S subunit in the 70S ribosome.

Its function is as follows. One of the primary rRNA binding proteins. Required for association of the 30S and 50S subunits to form the 70S ribosome, for tRNA binding and peptide bond formation. It has been suggested to have peptidyltransferase activity; this is somewhat controversial. Makes several contacts with the 16S rRNA in the 70S ribosome. This chain is Large ribosomal subunit protein uL2, found in Cellvibrio japonicus (strain Ueda107) (Pseudomonas fluorescens subsp. cellulosa).